We begin with the raw amino-acid sequence, 267 residues long: 4-hydroxy-tetrahydrodipicolinate reductase (267 aa).

Residues 8-13 (GAAGRM) and Glu-34 contribute to the NAD(+) site. Arg-35 is an NADP(+) binding site. NAD(+)-binding positions include 98–100 (GST) and 122–125 (APNM). The Proton donor/acceptor role is filled by His-155. His-156 lines the (S)-2,3,4,5-tetrahydrodipicolinate pocket. The active-site Proton donor is Lys-159. 165–166 (GT) is a binding site for (S)-2,3,4,5-tetrahydrodipicolinate.

It belongs to the DapB family.

It localises to the cytoplasm. The enzyme catalyses (S)-2,3,4,5-tetrahydrodipicolinate + NAD(+) + H2O = (2S,4S)-4-hydroxy-2,3,4,5-tetrahydrodipicolinate + NADH + H(+). It catalyses the reaction (S)-2,3,4,5-tetrahydrodipicolinate + NADP(+) + H2O = (2S,4S)-4-hydroxy-2,3,4,5-tetrahydrodipicolinate + NADPH + H(+). The protein operates within amino-acid biosynthesis; L-lysine biosynthesis via DAP pathway; (S)-tetrahydrodipicolinate from L-aspartate: step 4/4. In terms of biological role, catalyzes the conversion of 4-hydroxy-tetrahydrodipicolinate (HTPA) to tetrahydrodipicolinate. The chain is 4-hydroxy-tetrahydrodipicolinate reductase from Geobacter sp. (strain M21).